We begin with the raw amino-acid sequence, 415 residues long: T-cell-specific guanine nucleotide triphosphate-binding protein 1 (415 aa).

Residues 55–237 (APLHIAVTGE…PKLETKLLQD (183 aa)) enclose the IRG-type G domain. Residues glycine 66, glycine 68, lysine 69, and serine 70 each contribute to the GDP site. Threonine 89 carries the (Microbial infection) Phosphothreonine; by ROP17 modification. 4 residues coordinate GDP: glycine 90, lysine 171, aspartate 173, and asparagine 219.

Belongs to the TRAFAC class dynamin-like GTPase superfamily. IRG family. In terms of assembly, monomer, homodimer or homotetramer in the presence of GTP. Forms higher order homooligomers in GTP-dependent manner. As to quaternary structure, (Microbial infection) Interacts with Toxoplasma gondii ROP18. (Microbial infection) Phosphorylated by Toxoplasma gondii ROP17; the phosphorylation leads to disassembly of IRGB6 (TGTP1/TGTP2) polymers into monomers and dimers. Phosphorylated by Toxoplasma gondii ROP18. As to expression, expressed in thymus and lymph nodes, predominantly T-cells. Not expressed by immature CD4(+) CD8(+) thymocytes (at protein level). Expressed in IFNG-stimulated macrophages. Expressed at low levels in unstimulated astrocytes. Due to sequence similarity with Tgtp2, it is impossible to assign unambiguously experimental data published in the literature to Tgtp1 or Tgtp2 gene.

The protein resides in the cytoplasm. It localises to the endoplasmic reticulum. The protein localises to the golgi apparatus. Its subcellular location is the parasitophorous vacuole membrane. It catalyses the reaction GTP + H2O = GDP + phosphate + H(+). Its function is as follows. Involved in innate cell-autonomous resistance to intracellular pathogens, such as Toxoplasma gondii. During avirulent type II T.gondii infection, recruited to the parasitophorous vacuole (PV) membrane, leading to PV vesiculation and rupture, and subsequent digestion of the parasite within the cytosol. Not recruited to virulent type I T.gondii PV membrane. May confer an antiviral state for vesicular stomatitis virus. The polypeptide is T-cell-specific guanine nucleotide triphosphate-binding protein 1 (Tgtp1) (Mus musculus (Mouse)).